The chain runs to 273 residues: Large ribosomal subunit protein uL2 (273 aa).

Disordered stretches follow at residues 28–53 and 221–273; these read KPFA…TTRH and RGTA…RRSK. Residues 39-48 show a composition bias toward low complexity; the sequence is KSGGRNNNGR.

Belongs to the universal ribosomal protein uL2 family. As to quaternary structure, part of the 50S ribosomal subunit. Forms a bridge to the 30S subunit in the 70S ribosome.

In terms of biological role, one of the primary rRNA binding proteins. Required for association of the 30S and 50S subunits to form the 70S ribosome, for tRNA binding and peptide bond formation. It has been suggested to have peptidyltransferase activity; this is somewhat controversial. Makes several contacts with the 16S rRNA in the 70S ribosome. The chain is Large ribosomal subunit protein uL2 from Salmonella agona (strain SL483).